We begin with the raw amino-acid sequence, 349 residues long: Probable FBD-associated F-box protein At5g38565 (349 aa).

The 47-residue stretch at Met1 to Gly47 folds into the F-box domain. The FBD domain maps to Cys263–Ile311.

In Arabidopsis thaliana (Mouse-ear cress), this protein is Probable FBD-associated F-box protein At5g38565.